The primary structure comprises 354 residues: Selenide, water dikinase (354 aa).

The active site involves C23. ATP-binding positions include K26 and 54–56 (TAD). D57 is a binding site for Mg(2+). Residues D74, D97, and 145 to 147 (GHS) contribute to the ATP site. D97 is a Mg(2+) binding site. Position 233 (D233) interacts with Mg(2+).

Belongs to the selenophosphate synthase 1 family. Class I subfamily. Homodimer. It depends on Mg(2+) as a cofactor.

It catalyses the reaction hydrogenselenide + ATP + H2O = selenophosphate + AMP + phosphate + 2 H(+). Functionally, synthesizes selenophosphate from selenide and ATP. The sequence is that of Selenide, water dikinase from Paraburkholderia xenovorans (strain LB400).